The following is a 58-amino-acid chain: Large ribosomal subunit protein bL32 (58 aa).

A disordered region spans residues 1–24 (MAVPKKKTSKSKRDKRKATWKRKA).

This sequence belongs to the bacterial ribosomal protein bL32 family.

The protein is Large ribosomal subunit protein bL32 of Synechococcus sp. (strain ATCC 27144 / PCC 6301 / SAUG 1402/1) (Anacystis nidulans).